Reading from the N-terminus, the 1536-residue chain is Glycogen debranching enzyme (1536 aa).

Catalysis depends on residues Asp535, His538, and Asp670.

This sequence belongs to the glycogen debranching enzyme family. Interacts with IGD1.

The protein resides in the mitochondrion. Its subcellular location is the cytoplasm. It catalyses the reaction Transfers a segment of a (1-&gt;4)-alpha-D-glucan to a new position in an acceptor, which may be glucose or a (1-&gt;4)-alpha-D-glucan.. The catalysed reaction is Hydrolysis of (1-&gt;6)-alpha-D-glucosidic branch linkages in glycogen phosphorylase limit dextrin.. Its activity is regulated as follows. Activity is inhibited by IGD1. In terms of biological role, multifunctional enzyme acting as 1,4-alpha-D-glucan:1,4-alpha-D-glucan 4-alpha-D-glycosyltransferase and amylo-1,6-glucosidase in glycogen degradation. The polypeptide is Glycogen debranching enzyme (GDB1) (Saccharomyces cerevisiae (strain ATCC 204508 / S288c) (Baker's yeast)).